A 192-amino-acid chain; its full sequence is MSLIQRLRAVVAGDDYLDSDFDELDDYSRDEFDAGNRNPREYTSGLASFSGSNPFDVSGGSSSNVIGMPGISTATAEVNLMEPRSFDEMPKAIQALRERKTVILNLTMMEPDQAQRAVDFVAGGTFAIDGHQERVGESIFLFAPSCVSVTNSFQEEPAPSNVTTTTQQSEETISESVTAPEPAWGTPVASAI.

Residues 154-192 (QEEPAPSNVTTTTQQSEETISESVTAPEPAWGTPVASAI) are disordered. The segment covering 162–178 (VTTTTQQSEETISESVT) has biased composition (low complexity).

It belongs to the SepF family. Homodimer. Interacts with FtsZ.

It localises to the cytoplasm. In terms of biological role, cell division protein that is part of the divisome complex and is recruited early to the Z-ring. Probably stimulates Z-ring formation, perhaps through the cross-linking of FtsZ protofilaments. Its function overlaps with FtsA. This is Cell division protein SepF from Prochlorococcus marinus (strain MIT 9211).